The sequence spans 298 residues: ATP synthase gamma chain (298 aa).

The protein belongs to the ATPase gamma chain family. In terms of assembly, F-type ATPases have 2 components, CF(1) - the catalytic core - and CF(0) - the membrane proton channel. CF(1) has five subunits: alpha(3), beta(3), gamma(1), delta(1), epsilon(1). CF(0) has three main subunits: a, b and c.

The protein resides in the cell inner membrane. Produces ATP from ADP in the presence of a proton gradient across the membrane. The gamma chain is believed to be important in regulating ATPase activity and the flow of protons through the CF(0) complex. The chain is ATP synthase gamma chain from Granulibacter bethesdensis (strain ATCC BAA-1260 / CGDNIH1).